The primary structure comprises 197 residues: Probable proteasome subunit beta type-4 (197 aa).

It belongs to the peptidase T1B family. The 26S proteasome consists of a 20S proteasome core and two 19S regulatory subunits. The 20S proteasome core is composed of 28 subunits that are arranged in four stacked rings, resulting in a barrel-shaped structure. The two end rings are each formed by seven alpha subunits, and the two central rings are each formed by seven beta subunits. The catalytic chamber with the active sites is on the inside of the barrel.

The protein resides in the cytoplasm. It is found in the nucleus. Functionally, non-catalytic component of the proteasome which degrades poly-ubiquitinated proteins in the cytoplasm and in the nucleus. It is essential for the regulated turnover of proteins and for the removal of misfolded proteins. The proteasome is a multicatalytic proteinase complex that is characterized by its ability to cleave peptides with Arg, Phe, Tyr, Leu, and Glu adjacent to the leaving group at neutral or slightly basic pH. It has an ATP-dependent proteolytic activity. This chain is Probable proteasome subunit beta type-4 (PRE1), found in Encephalitozoon cuniculi (strain GB-M1) (Microsporidian parasite).